We begin with the raw amino-acid sequence, 128 residues long: uncharacterized protein (128 aa).

Disordered stretches follow at residues 62–83 (LNPS…SPRV) and 101–128 (FAAS…RYQP). Residues 101 to 114 (FAASSSSTAPVTVT) show a composition bias toward low complexity.

Its subcellular location is the cytoplasm. It is found in the nucleus. This is an uncharacterized protein from Saccharomyces cerevisiae (strain ATCC 204508 / S288c) (Baker's yeast).